The chain runs to 381 residues: Choline transport ATP-binding protein OpuBA (381 aa).

The 235-residue stretch at 2 to 236 folds into the ABC transporter domain; the sequence is LTLENVSKTY…PADEFVEEFI (235 aa). An ATP-binding site is contributed by 35–42; sequence GPSGCGKT. CBS domains are found at residues 256–314 and 316–374; these read MNTQ…LVSE and LHED…WGEE.

The protein belongs to the ABC transporter superfamily.

Its function is as follows. Involved in a high affinity multicomponent binding-protein-dependent transport system for choline. Probably responsible for energy coupling to the transport system. This chain is Choline transport ATP-binding protein OpuBA (opuBA), found in Bacillus subtilis (strain 168).